The sequence spans 528 residues: Chromosomal replication initiator protein DnaA (528 aa).

The tract at residues 1–104 (MNDDPNALAR…PVDDEPESDP (104 aa)) is domain I, interacts with DnaA modulators. The segment at 95-158 (PVDDEPESDP…TDFEEVDDDR (64 aa)) is disordered. Over residues 104-123 (PPSRDHRPEPEPLHTPRHLE) the composition is skewed to basic and acidic residues. A domain II region spans residues 105-187 (PSRDHRPEPE…GPAPSATGGN (83 aa)). Residues 149–158 (TDFEEVDDDR) are compositionally biased toward acidic residues. The domain III, AAA+ region stretch occupies residues 188 to 404 (SLNAKYTFDT…GALIRVTAFA (217 aa)). Gly232, Gly234, Lys235, and Thr236 together coordinate ATP. Residues 405 to 528 (SLNRQPLDLT…TARIKQRSKR (124 aa)) are domain IV, binds dsDNA.

This sequence belongs to the DnaA family. In terms of assembly, oligomerizes as a right-handed, spiral filament on DNA at oriC.

It is found in the cytoplasm. Functionally, plays an essential role in the initiation and regulation of chromosomal replication. ATP-DnaA binds to the origin of replication (oriC) to initiate formation of the DNA replication initiation complex once per cell cycle. Binds the DnaA box (a 9 base pair repeat at the origin) and separates the double-stranded (ds)DNA. Forms a right-handed helical filament on oriC DNA; dsDNA binds to the exterior of the filament while single-stranded (ss)DNA is stabiized in the filament's interior. The ATP-DnaA-oriC complex binds and stabilizes one strand of the AT-rich DNA unwinding element (DUE), permitting loading of DNA polymerase. After initiation quickly degrades to an ADP-DnaA complex that is not apt for DNA replication. Binds acidic phospholipids. This is Chromosomal replication initiator protein DnaA from Rhodococcus jostii (strain RHA1).